Reading from the N-terminus, the 78-residue chain is Small ribosomal subunit protein bS16c (78 aa).

It belongs to the bacterial ribosomal protein bS16 family.

It is found in the plastid. It localises to the chloroplast. The protein is Small ribosomal subunit protein bS16c of Panax ginseng (Korean ginseng).